The following is a 37-amino-acid chain: Large ribosomal subunit protein bL36 (37 aa).

The protein belongs to the bacterial ribosomal protein bL36 family.

The chain is Large ribosomal subunit protein bL36 from Caldanaerobacter subterraneus subsp. tengcongensis (strain DSM 15242 / JCM 11007 / NBRC 100824 / MB4) (Thermoanaerobacter tengcongensis).